The primary structure comprises 201 residues: Recombination protein RecR (201 aa).

The C4-type zinc-finger motif lies at 57 to 72; the sequence is CRDCRTFTEQEVCTIC. The 96-residue stretch at 81–176 folds into the Toprim domain; that stretch reads GQICVVESPA…LASRIAHGVP (96 aa).

This sequence belongs to the RecR family.

Functionally, may play a role in DNA repair. It seems to be involved in an RecBC-independent recombinational process of DNA repair. It may act with RecF and RecO. The protein is Recombination protein RecR of Edwardsiella ictaluri (strain 93-146).